Consider the following 125-residue polypeptide: Small ribosomal subunit protein bS6m (125 aa).

This sequence belongs to the bacterial ribosomal protein bS6 family. Component of the mitochondrial ribosome small subunit (28S) which comprises a 12S rRNA and about 30 distinct proteins.

Its subcellular location is the mitochondrion. This Mus musculus (Mouse) protein is Small ribosomal subunit protein bS6m (Mrps6).